Here is a 95-residue protein sequence, read N- to C-terminus: UPF0358 protein GK1077 (95 aa).

This sequence belongs to the UPF0358 family.

The chain is UPF0358 protein GK1077 from Geobacillus kaustophilus (strain HTA426).